The primary structure comprises 213 residues: Kynurenine formamidase (213 aa).

Position 18 (tryptophan 18) interacts with substrate. Zn(2+)-binding residues include histidine 48, histidine 52, and aspartate 54. Residue histidine 58 is the Proton donor/acceptor of the active site. Positions 160 and 172 each coordinate Zn(2+).

This sequence belongs to the Cyclase 1 superfamily. KynB family. As to quaternary structure, homodimer. The cofactor is Zn(2+).

It carries out the reaction N-formyl-L-kynurenine + H2O = L-kynurenine + formate + H(+). Its pathway is amino-acid degradation; L-tryptophan degradation via kynurenine pathway; L-kynurenine from L-tryptophan: step 2/2. Functionally, catalyzes the hydrolysis of N-formyl-L-kynurenine to L-kynurenine, the second step in the kynurenine pathway of tryptophan degradation. The polypeptide is Kynurenine formamidase (Burkholderia cenocepacia (strain ATCC BAA-245 / DSM 16553 / LMG 16656 / NCTC 13227 / J2315 / CF5610) (Burkholderia cepacia (strain J2315))).